A 303-amino-acid polypeptide reads, in one-letter code: UDP-3-O-acyl-N-acetylglucosamine deacetylase (303 aa).

Zn(2+)-binding residues include His-78, His-237, and Asp-241. The Proton donor role is filled by His-264.

The protein belongs to the LpxC family. It depends on Zn(2+) as a cofactor.

It carries out the reaction a UDP-3-O-[(3R)-3-hydroxyacyl]-N-acetyl-alpha-D-glucosamine + H2O = a UDP-3-O-[(3R)-3-hydroxyacyl]-alpha-D-glucosamine + acetate. It participates in glycolipid biosynthesis; lipid IV(A) biosynthesis; lipid IV(A) from (3R)-3-hydroxytetradecanoyl-[acyl-carrier-protein] and UDP-N-acetyl-alpha-D-glucosamine: step 2/6. In terms of biological role, catalyzes the hydrolysis of UDP-3-O-myristoyl-N-acetylglucosamine to form UDP-3-O-myristoylglucosamine and acetate, the committed step in lipid A biosynthesis. This is UDP-3-O-acyl-N-acetylglucosamine deacetylase from Pseudomonas fluorescens (strain Pf0-1).